The primary structure comprises 310 residues: Ribose-phosphate pyrophosphokinase (310 aa).

ATP is bound by residues 34 to 36 (DQE) and 93 to 94 (RQ). 2 residues coordinate Mg(2+): histidine 127 and aspartate 167. Residue lysine 190 is part of the active site. D-ribose 5-phosphate contacts are provided by residues arginine 192, aspartate 216, and 220–224 (DSGGT).

It belongs to the ribose-phosphate pyrophosphokinase family. Class I subfamily. As to quaternary structure, homohexamer. Mg(2+) is required as a cofactor.

It localises to the cytoplasm. The enzyme catalyses D-ribose 5-phosphate + ATP = 5-phospho-alpha-D-ribose 1-diphosphate + AMP + H(+). It participates in metabolic intermediate biosynthesis; 5-phospho-alpha-D-ribose 1-diphosphate biosynthesis; 5-phospho-alpha-D-ribose 1-diphosphate from D-ribose 5-phosphate (route I): step 1/1. Its function is as follows. Involved in the biosynthesis of the central metabolite phospho-alpha-D-ribosyl-1-pyrophosphate (PRPP) via the transfer of pyrophosphoryl group from ATP to 1-hydroxyl of ribose-5-phosphate (Rib-5-P). This chain is Ribose-phosphate pyrophosphokinase, found in Brucella melitensis biotype 1 (strain ATCC 23456 / CCUG 17765 / NCTC 10094 / 16M).